Here is a 157-residue protein sequence, read N- to C-terminus: Transcription elongation factor GreA (157 aa).

The protein belongs to the GreA/GreB family.

Necessary for efficient RNA polymerase transcription elongation past template-encoded arresting sites. The arresting sites in DNA have the property of trapping a certain fraction of elongating RNA polymerases that pass through, resulting in locked ternary complexes. Cleavage of the nascent transcript by cleavage factors such as GreA or GreB allows the resumption of elongation from the new 3'terminus. GreA releases sequences of 2 to 3 nucleotides. The protein is Transcription elongation factor GreA of Azorhizobium caulinodans (strain ATCC 43989 / DSM 5975 / JCM 20966 / LMG 6465 / NBRC 14845 / NCIMB 13405 / ORS 571).